The chain runs to 531 residues: 2-isopropylmalate synthase (531 aa).

Positions 8–284 (IIIFDTTLRD…LTNIDTKQIY (277 aa)) constitute a Pyruvate carboxyltransferase domain. The Mn(2+) site is built by Asp17, His208, His210, and Asn244. Positions 408–531 (RVELVQVSCG…TQDKQTEVTA (124 aa)) are regulatory domain.

The protein belongs to the alpha-IPM synthase/homocitrate synthase family. LeuA type 1 subfamily. As to quaternary structure, homodimer. Mn(2+) is required as a cofactor.

It localises to the cytoplasm. It catalyses the reaction 3-methyl-2-oxobutanoate + acetyl-CoA + H2O = (2S)-2-isopropylmalate + CoA + H(+). It participates in amino-acid biosynthesis; L-leucine biosynthesis; L-leucine from 3-methyl-2-oxobutanoate: step 1/4. Functionally, catalyzes the condensation of the acetyl group of acetyl-CoA with 3-methyl-2-oxobutanoate (2-ketoisovalerate) to form 3-carboxy-3-hydroxy-4-methylpentanoate (2-isopropylmalate). In Nostoc sp. (strain PCC 7120 / SAG 25.82 / UTEX 2576), this protein is 2-isopropylmalate synthase.